We begin with the raw amino-acid sequence, 323 residues long: DNA-directed RNA polymerase subunit alpha (323 aa).

Positions 1-233 (MGQEKVTVST…DLFIPFFHAE (233 aa)) are alpha N-terminal domain (alpha-NTD). The tract at residues 264–323 (IALKYIYIDQSELPPRVYNCLKRSNINTFLELLNNSQEELMKIQDFRIEDVKHILDVLEI) is alpha C-terminal domain (alpha-CTD).

The protein belongs to the RNA polymerase alpha chain family. In plastids the minimal PEP RNA polymerase catalytic core is composed of four subunits: alpha, beta, beta', and beta''. When a (nuclear-encoded) sigma factor is associated with the core the holoenzyme is formed, which can initiate transcription.

The protein localises to the plastid. It is found in the chloroplast. The catalysed reaction is RNA(n) + a ribonucleoside 5'-triphosphate = RNA(n+1) + diphosphate. Its function is as follows. DNA-dependent RNA polymerase catalyzes the transcription of DNA into RNA using the four ribonucleoside triphosphates as substrates. In Morus indica (Mulberry), this protein is DNA-directed RNA polymerase subunit alpha.